Consider the following 228-residue polypeptide: Nuclear phosphoprotein UL3 homolog (228 aa).

Belongs to the alphaherpesvirinae HHV-1 UL3 family. Post-translationally, phosphorylated.

Its subcellular location is the host nucleus. The protein is Nuclear phosphoprotein UL3 homolog (MDV015) of Gallus gallus (Chicken).